The following is a 439-amino-acid chain: ATP-dependent RNA helicase RhlB (439 aa).

The short motif at 9-37 is the Q motif element; sequence QKFADLPLHPEVKQALAENGFEFCTPIQA. A Helicase ATP-binding domain is found at 40–219; it reads LPVLLQSKDI…YDHMNDPVKV (180 aa). Residue 53-60 participates in ATP binding; sequence AQTGTGKT. The DEAD box signature appears at 165-168; that stretch reads DEAD. The Helicase C-terminal domain occupies 243–390; the sequence is KMRLLLTLIE…VSNYDSSALL (148 aa). Residues 398–439 are disordered; it reads KIPRKHPAGTRNLRERAGAGRPQGAHRSGGRPPRHDRTRRHS. The segment covering 425–439 has biased composition (basic residues); the sequence is SGGRPPRHDRTRRHS.

It belongs to the DEAD box helicase family. RhlB subfamily. As to quaternary structure, component of the RNA degradosome, which is a multiprotein complex involved in RNA processing and mRNA degradation.

The protein localises to the cytoplasm. It carries out the reaction ATP + H2O = ADP + phosphate + H(+). DEAD-box RNA helicase involved in RNA degradation. Has RNA-dependent ATPase activity and unwinds double-stranded RNA. The chain is ATP-dependent RNA helicase RhlB from Shewanella putrefaciens (strain CN-32 / ATCC BAA-453).